The following is a 248-amino-acid chain: Proteasome subunit alpha (248 aa).

The protein belongs to the peptidase T1A family. As to quaternary structure, the 20S proteasome core is composed of 14 alpha and 14 beta subunits that assemble into four stacked heptameric rings, resulting in a barrel-shaped structure. The two inner rings, each composed of seven catalytic beta subunits, are sandwiched by two outer rings, each composed of seven alpha subunits. The catalytic chamber with the active sites is on the inside of the barrel. Has a gated structure, the ends of the cylinder being occluded by the N-termini of the alpha-subunits. Is capped by the proteasome-associated ATPase, ARC.

The protein resides in the cytoplasm. Its pathway is protein degradation; proteasomal Pup-dependent pathway. The formation of the proteasomal ATPase ARC-20S proteasome complex, likely via the docking of the C-termini of ARC into the intersubunit pockets in the alpha-rings, may trigger opening of the gate for substrate entry. Interconversion between the open-gate and close-gate conformations leads to a dynamic regulation of the 20S proteasome proteolysis activity. Component of the proteasome core, a large protease complex with broad specificity involved in protein degradation. This chain is Proteasome subunit alpha, found in Mycobacterium tuberculosis (strain ATCC 25177 / H37Ra).